We begin with the raw amino-acid sequence, 364 residues long: Dual-specificity RNA methyltransferase RlmN (364 aa).

The active-site Proton acceptor is the Glu-91. Residues 97–333 enclose the Radical SAM core domain; that stretch reads ESDRGTLCIS…VTVRKTRGDD (237 aa). Cys-104 and Cys-338 are disulfide-bonded. Cys-111, Cys-115, and Cys-118 together coordinate [4Fe-4S] cluster. Residues 164 to 165, Ser-196, 218 to 220, and Asn-295 contribute to the S-adenosyl-L-methionine site; these read GE and SLH. Cys-338 serves as the catalytic S-methylcysteine intermediate.

This sequence belongs to the radical SAM superfamily. RlmN family. [4Fe-4S] cluster serves as cofactor.

It is found in the cytoplasm. The catalysed reaction is adenosine(2503) in 23S rRNA + 2 reduced [2Fe-2S]-[ferredoxin] + 2 S-adenosyl-L-methionine = 2-methyladenosine(2503) in 23S rRNA + 5'-deoxyadenosine + L-methionine + 2 oxidized [2Fe-2S]-[ferredoxin] + S-adenosyl-L-homocysteine. It catalyses the reaction adenosine(37) in tRNA + 2 reduced [2Fe-2S]-[ferredoxin] + 2 S-adenosyl-L-methionine = 2-methyladenosine(37) in tRNA + 5'-deoxyadenosine + L-methionine + 2 oxidized [2Fe-2S]-[ferredoxin] + S-adenosyl-L-homocysteine. Specifically methylates position 2 of adenine 2503 in 23S rRNA and position 2 of adenine 37 in tRNAs. m2A2503 modification seems to play a crucial role in the proofreading step occurring at the peptidyl transferase center and thus would serve to optimize ribosomal fidelity. This chain is Dual-specificity RNA methyltransferase RlmN, found in Neisseria meningitidis serogroup C (strain 053442).